A 342-amino-acid polypeptide reads, in one-letter code: Methylthioribose-1-phosphate isomerase (342 aa).

Residues 49 to 51, Arg86, and Gln187 each bind substrate; that span reads RGA. Asp228 serves as the catalytic Proton donor. 238–239 provides a ligand contact to substrate; sequence NK.

Belongs to the eIF-2B alpha/beta/delta subunits family. MtnA subfamily.

The enzyme catalyses 5-(methylsulfanyl)-alpha-D-ribose 1-phosphate = 5-(methylsulfanyl)-D-ribulose 1-phosphate. It functions in the pathway amino-acid biosynthesis; L-methionine biosynthesis via salvage pathway; L-methionine from S-methyl-5-thio-alpha-D-ribose 1-phosphate: step 1/6. Catalyzes the interconversion of methylthioribose-1-phosphate (MTR-1-P) into methylthioribulose-1-phosphate (MTRu-1-P). The polypeptide is Methylthioribose-1-phosphate isomerase (Klebsiella pneumoniae (strain 342)).